We begin with the raw amino-acid sequence, 337 residues long: tRNA N6-adenosine threonylcarbamoyltransferase (337 aa).

His-111 and His-115 together coordinate Fe cation. Substrate-binding positions include 134–138 (LVSGG), Asp-167, Gly-180, and Asn-272. A Fe cation-binding site is contributed by Asp-300.

This sequence belongs to the KAE1 / TsaD family. Fe(2+) serves as cofactor.

The protein resides in the cytoplasm. The enzyme catalyses L-threonylcarbamoyladenylate + adenosine(37) in tRNA = N(6)-L-threonylcarbamoyladenosine(37) in tRNA + AMP + H(+). In terms of biological role, required for the formation of a threonylcarbamoyl group on adenosine at position 37 (t(6)A37) in tRNAs that read codons beginning with adenine. Is involved in the transfer of the threonylcarbamoyl moiety of threonylcarbamoyl-AMP (TC-AMP) to the N6 group of A37, together with TsaE and TsaB. TsaD likely plays a direct catalytic role in this reaction. The polypeptide is tRNA N6-adenosine threonylcarbamoyltransferase (Salmonella arizonae (strain ATCC BAA-731 / CDC346-86 / RSK2980)).